Reading from the N-terminus, the 182-residue chain is CDP-diacylglycerol--glycerol-3-phosphate 3-phosphatidyltransferase (182 aa).

The Cytoplasmic segment spans residues 1-12 (MRLNIPTCLTLF). A helical membrane pass occupies residues 13 to 37 (RLIIVPFFIIVFYLPFSNASFYSAI). At 38-60 (IFILAALTDWFDGFLARKLNQTT) the chain is on the periplasmic side. A helical transmembrane segment spans residues 61–81 (CFGAFLDPVADKIIVVIGLIL). Residues 82–86 (IIEYF) lie on the Cytoplasmic side of the membrane. Residues 87–107 (HSFWITIPSLIMIIREIIISS) traverse the membrane as a helical segment. At 108-145 (LREWMAEIGKNNLLSVSLISKLKTSIQMLAIFSLLWKE) the chain is on the periplasmic side. Residues 146–168 (TYIIIIIGILSLYVSSILAFLSM) traverse the membrane as a helical segment. Over 169 to 181 (LKYFYIAWRDLFR) the chain is Cytoplasmic.

It belongs to the CDP-alcohol phosphatidyltransferase class-I family.

Its subcellular location is the cell inner membrane. It carries out the reaction a CDP-1,2-diacyl-sn-glycerol + sn-glycerol 3-phosphate = a 1,2-diacyl-sn-glycero-3-phospho-(1'-sn-glycero-3'-phosphate) + CMP + H(+). It functions in the pathway phospholipid metabolism; phosphatidylglycerol biosynthesis; phosphatidylglycerol from CDP-diacylglycerol: step 1/2. Catalyzes the conversion of cytidine diphosphate diacylglycerol (CDP-DG) and glycerol 3-phosphate into phosphatidylglycerol. Essential for the synthesis of anionic phospholipids, thereby playing a role in balancing the ratio of zwitterionic and anionic phospholipids, which is thought to be important for normal membrane function. This chain is CDP-diacylglycerol--glycerol-3-phosphate 3-phosphatidyltransferase, found in Wigglesworthia glossinidia brevipalpis.